A 127-amino-acid polypeptide reads, in one-letter code: Classical arabinogalactan protein 10 (127 aa).

Residues 1-21 (MASKSVVVLLFLALIASSAIA) form the signal peptide. Q22 is modified (pyrrolidone carboxylic acid). The interval 22-107 (QAPGPAPTRS…TGSTPVDNNN (86 aa)) is disordered. A 4-hydroxyproline mark is found at P24, P26, P28, P32, and P36. O-linked (Ara...) hydroxyproline glycans are attached at residues P24, P26, P28, P32, and P36. Composition is skewed to pro residues over residues 25 to 39 (GPAP…PAQP), 48 to 58 (SITPTPTPTPS), and 66 to 86 (VSPP…PPTS). Over residues 98–107 (TGSTPVDNNN) the composition is skewed to polar residues. N107 carries GPI-anchor amidated asparagine lipidation. The propeptide at 108-127 (AATLAAGSLAGFVFVASLLL) is removed in mature form.

This sequence belongs to the classical AGP family. Post-translationally, O-glycosylated on hydroxyprolines; noncontiguous hydroxylproline residues are glycosylated with arabinogalactan. In terms of tissue distribution, predominantly expressed in flowers and at a lower level in roots and siliques.

It is found in the cell membrane. Its function is as follows. Proteoglycan that seems to be implicated in diverse developmental roles such as differentiation, cell-cell recognition, embryogenesis and programmed cell death. The sequence is that of Classical arabinogalactan protein 10 (AGP10) from Arabidopsis thaliana (Mouse-ear cress).